The following is a 317-amino-acid chain: Thymidylate synthase (317 aa).

DUMP is bound by residues Arg40 and 167 to 168 (RR). The Nucleophile role is filled by Cys187. Residues 216–219 (RSCD), Asn227, and 257–259 (HVY) contribute to the dUMP site. Asp219 is a (6R)-5,10-methylene-5,6,7,8-tetrahydrofolate binding site.

The protein belongs to the thymidylate synthase family. Homodimer.

It catalyses the reaction dUMP + (6R)-5,10-methylene-5,6,7,8-tetrahydrofolate = 7,8-dihydrofolate + dTMP. It functions in the pathway pyrimidine metabolism; dTTP biosynthesis. In Cryptococcus neoformans var. neoformans serotype D (strain B-3501A) (Filobasidiella neoformans), this protein is Thymidylate synthase (TMP1).